A 305-amino-acid chain; its full sequence is Ribonuclease BN (305 aa).

7 residues coordinate Zn(2+): H64, H66, D68, H69, H141, D212, and H270. D68 acts as the Proton acceptor in catalysis.

This sequence belongs to the RNase Z family. RNase BN subfamily. As to quaternary structure, homodimer. Requires Zn(2+) as cofactor.

Zinc phosphodiesterase, which has both exoribonuclease and endoribonuclease activities. This Escherichia coli O17:K52:H18 (strain UMN026 / ExPEC) protein is Ribonuclease BN.